Here is an 877-residue protein sequence, read N- to C-terminus: Putative ankyrin repeat protein R748 (877 aa).

6 ANK repeats span residues 44–74 (IRHI…TINV), 79–109 (QNNT…NINY), 115–145 (IGIS…AIQQ), 202–231 (MGYR…SINE), 243–272 (NNND…PIHM), and 282–311 (LVPT…SIQA). A disordered region spans residues 525–579 (DSDEDPVCDSNESDNSNDINNHVKSDNKLNSSNDYYDEDDSEDNYNNQSDDEPLV). Low complexity predominate over residues 533–544 (DSNESDNSNDIN).

In Acanthamoeba polyphaga mimivirus (APMV), this protein is Putative ankyrin repeat protein R748.